A 100-amino-acid polypeptide reads, in one-letter code: NADH-quinone oxidoreductase subunit K (100 aa).

3 consecutive transmembrane segments (helical) span residues 4–24 (LSYSLSLAAILFMLGLTGIMI), 29–49 (LFLLLGLEIMINAAALAFVIV), and 60–80 (VMYILTVTIAATEASIGLALL).

Belongs to the complex I subunit 4L family. NDH-1 is composed of 14 different subunits. Subunits NuoA, H, J, K, L, M, N constitute the membrane sector of the complex.

It localises to the cell membrane. It carries out the reaction a quinone + NADH + 5 H(+)(in) = a quinol + NAD(+) + 4 H(+)(out). NDH-1 shuttles electrons from NADH, via FMN and iron-sulfur (Fe-S) centers, to quinones in the respiratory chain. The immediate electron acceptor for the enzyme in this species is believed to be ubiquinone. Couples the redox reaction to proton translocation (for every two electrons transferred, four hydrogen ions are translocated across the cytoplasmic membrane), and thus conserves the redox energy in a proton gradient. In Baumannia cicadellinicola subsp. Homalodisca coagulata, this protein is NADH-quinone oxidoreductase subunit K.